Here is a 479-residue protein sequence, read N- to C-terminus: Sucrose-6-phosphate hydrolase (479 aa).

Residues 44–47, Q63, 106–107, 166–167, and E223 each bind substrate; these read LLND, YS, and RD. The active site involves D47.

Belongs to the glycosyl hydrolase 32 family.

Its subcellular location is the cytoplasm. The catalysed reaction is Hydrolysis of terminal non-reducing beta-D-fructofuranoside residues in beta-D-fructofuranosides.. It participates in glycan biosynthesis; sucrose metabolism. This chain is Sucrose-6-phosphate hydrolase (scrB), found in Streptococcus mutans serotype c (strain ATCC 700610 / UA159).